A 323-amino-acid polypeptide reads, in one-letter code: MAGTPDASMEEILWRSPPHVQMMGGYLHSNNILFYFAESPFFDPTSNNASLAIQANYNEAFRHFVETREAFEGRLKTMQGLEFVVSYDPIQAAAQPDGRFAHEPSNIWVIRKQNRRKRTGLDDEVAVLSTYFIVGDCIYMAPSVASVVGNRILSAVTSLTSLLKTASTLPTFTPSHGHTYMPPALKQADASQPGTQSQQSKENTPLPDADAAGKASLVGSSQMVGAGSSLQDTRTLAESFNLLRRYGDEFMDEHPLVGEPGSFILSRVNDTDRTSAAKPPATAAKVGTPQVRVDTPGKVSEKGATPSGSEENKMRKKKTKVGS.

2 disordered regions span residues 172-213 (FTPS…DAAG) and 271-323 (TDRT…KVGS). The span at 189 to 203 (DASQPGTQSQQSKEN) shows a compositional bias: polar residues. A compositionally biased stretch (low complexity) spans 276–285 (AAKPPATAAK). The span at 314–323 (MRKKKTKVGS) shows a compositional bias: basic residues.

It belongs to the Mediator complex subunit 6 family. Component of the Mediator complex.

The protein resides in the nucleus. Functionally, component of the Mediator complex, a coactivator involved in the regulated transcription of nearly all RNA polymerase II-dependent genes. Mediator functions as a bridge to convey information from gene-specific regulatory proteins to the basal RNA polymerase II transcription machinery. Mediator is recruited to promoters by direct interactions with regulatory proteins and serves as a scaffold for the assembly of a functional preinitiation complex with RNA polymerase II and the general transcription factors. This is Mediator of RNA polymerase II transcription subunit 6 (med6) from Aspergillus niger (strain ATCC MYA-4892 / CBS 513.88 / FGSC A1513).